Consider the following 146-residue polypeptide: 3-dehydroquinate dehydratase (146 aa).

Tyr-22 functions as the Proton acceptor in the catalytic mechanism. Substrate contacts are provided by Asn-73, His-79, and Asp-86. The active-site Proton donor is the His-99. Substrate-binding positions include 100-101 (VS) and Arg-110.

The protein belongs to the type-II 3-dehydroquinase family. As to quaternary structure, homododecamer.

It catalyses the reaction 3-dehydroquinate = 3-dehydroshikimate + H2O. The protein operates within metabolic intermediate biosynthesis; chorismate biosynthesis; chorismate from D-erythrose 4-phosphate and phosphoenolpyruvate: step 3/7. Its function is as follows. Catalyzes a trans-dehydration via an enolate intermediate. This Kineococcus radiotolerans (strain ATCC BAA-149 / DSM 14245 / SRS30216) protein is 3-dehydroquinate dehydratase.